Reading from the N-terminus, the 296-residue chain is MPSLKDLRNRITSVKATQKITKAMQMVAAAKLRRAQNAAENGRPYAERMAQVLGNLAGNLIGGVGAPRLLTGTGQDRVHLLVVCTGDRGLAGAFNSSIARLARDHANRLMADGKTVKIITIGKKGLDVLRRQFRDQIIASRDIRGNKPVDYPFAAEIADDILARFEAGEFDVATLFYSEFRSVISQIPTAQKLIPAELPTAEGAAATGAGSDAAMEFEPNEETILETLLPKNLTVQIFRALLENAASEQGARMSAMDSATRNAGEMIKKQTLIYNRTRQAMITKELIEIISGAEAL.

Belongs to the ATPase gamma chain family. As to quaternary structure, F-type ATPases have 2 components, CF(1) - the catalytic core - and CF(0) - the membrane proton channel. CF(1) has five subunits: alpha(3), beta(3), gamma(1), delta(1), epsilon(1). CF(0) has three main subunits: a, b and c.

Its subcellular location is the cell inner membrane. Functionally, produces ATP from ADP in the presence of a proton gradient across the membrane. The gamma chain is believed to be important in regulating ATPase activity and the flow of protons through the CF(0) complex. The chain is ATP synthase gamma chain from Methylorubrum extorquens (strain PA1) (Methylobacterium extorquens).